The chain runs to 2711 residues: Chromodomain-helicase-DNA-binding protein 6 (2711 aa).

4 stretches are compositionally biased toward basic and acidic residues: residues 1 to 12, 100 to 115, 122 to 151, and 158 to 171; these read MKMKIQKKEKQL, EPGE…DREP, EPKE…DGVK, and EASG…KRSC. 2 disordered regions span residues 1–52 and 66–243; these read MKMK…EEAA and EEAD…QVKR. Residues 1 to 746 form a required for DNA-dependent ATPase activity region; the sequence is MKMKIQKKEK…MMELRKCCNH (746 aa). The segment covering 214–224 has biased composition (low complexity); sequence SLPNPSLQSPE. Chromo domains lie at 291–342 and 374–438; these read NIIE…KDPR and IEID…KHVE. Positions 472–646 constitute a Helicase ATP-binding domain; the sequence is LFNWYNRKNC…FSLLNFLEPS (175 aa). 485–492 provides a ligand contact to ATP; sequence DEMGLGKT. The DEAH box signature appears at 597-600; that stretch reads DEAH. The Helicase C-terminal domain maps to 786-955; that stretch reads LIDKLLPKLI…LSKMEVEDLL (170 aa). The tract at residues 1318–1389 is disordered; it reads SLSAEQGVTD…SDPDKSPWPV (72 aa). Residues 1320-1329 are compositionally biased toward polar residues; sequence SAEQGVTDGT. The segment covering 1332–1350 has biased composition (basic and acidic residues); it reads IPERGNIDKEDSAEDKLDG. The Myb-like domain occupies 1448–1502; the sequence is RWTRREQADFYRTVSSFGVVYDQEKKAFDWTQFRIISRLDKKSDESLEHYFYSFV. Position 1865 is a phosphoserine (Ser-1865). Disordered stretches follow at residues 1951-1978, 1997-2059, 2124-2147, 2321-2350, 2373-2419, 2550-2602, and 2641-2711; these read SEDS…TVEG, EPWK…ASGI, LPTP…ATEH, TTLS…QAEK, GFGT…RGFL, SASL…ITTS, and RHSE…EDTN. Residues 2017–2036 are compositionally biased toward basic and acidic residues; it reads SEPKPEDMDFENKDDYEKDG. Low complexity-rich tracts occupy residues 2130–2140 and 2333–2349; these read SSSAGSRSSLS and ATSS…SQAE. Residues 2550–2563 are compositionally biased toward low complexity; it reads SASLASTKSGTSAT. The segment covering 2565-2586 has biased composition (basic and acidic residues); the sequence is KSTEDKLSGHDVNTDALVDDKP. 2 stretches are compositionally biased toward polar residues: residues 2591–2602 and 2677–2688; these read FSDQSEPTITTS and SDQNCTESSATV. A compositionally biased stretch (basic and acidic residues) spans 2690–2711; sequence PEREHVAQAREEGLKDSNEDTN.

It belongs to the SNF2/RAD54 helicase family. Interacts with NFE2L2; involved in activation of the transcription. As to expression, widely expressed.

Its subcellular location is the nucleus. The protein resides in the nucleoplasm. It catalyses the reaction ATP + H2O = ADP + phosphate + H(+). Functionally, ATP-dependent chromatin-remodeling factor. Regulates transcription by disrupting nucleosomes in a largely non-sliding manner which strongly increases the accessibility of chromatin. Activates transcription of specific genes in response to oxidative stress through interaction with NFE2L2. The chain is Chromodomain-helicase-DNA-binding protein 6 (Chd6) from Mus musculus (Mouse).